Here is a 301-residue protein sequence, read N- to C-terminus: Probable 5-dehydro-4-deoxyglucarate dehydratase (301 aa).

This sequence belongs to the DapA family.

It carries out the reaction 5-dehydro-4-deoxy-D-glucarate + H(+) = 2,5-dioxopentanoate + CO2 + H2O. Its pathway is carbohydrate acid metabolism; D-glucarate degradation; 2,5-dioxopentanoate from D-glucarate: step 2/2. The polypeptide is Probable 5-dehydro-4-deoxyglucarate dehydratase (Cereibacter sphaeroides (strain ATCC 17029 / ATH 2.4.9) (Rhodobacter sphaeroides)).